We begin with the raw amino-acid sequence, 250 residues long: uncharacterized protein (250 aa).

A helical transmembrane segment spans residues 2–22 (ILRIIIFVIIILVVSLLLIYF).

The protein localises to the membrane. This is an uncharacterized protein from Acanthamoeba polyphaga (Amoeba).